The sequence spans 365 residues: Chorismate synthase (365 aa).

Residue R46 participates in NADP(+) binding. FMN is bound by residues 124-126 (RAS), G284, 299-303 (KPTPS), and R326.

The protein belongs to the chorismate synthase family. FMNH2 serves as cofactor.

It catalyses the reaction 5-O-(1-carboxyvinyl)-3-phosphoshikimate = chorismate + phosphate. Its pathway is metabolic intermediate biosynthesis; chorismate biosynthesis; chorismate from D-erythrose 4-phosphate and phosphoenolpyruvate: step 7/7. Its function is as follows. Catalyzes the anti-1,4-elimination of the C-3 phosphate and the C-6 proR hydrogen from 5-enolpyruvylshikimate-3-phosphate (EPSP) to yield chorismate, which is the branch point compound that serves as the starting substrate for the three terminal pathways of aromatic amino acid biosynthesis. This reaction introduces a second double bond into the aromatic ring system. In Pyrobaculum neutrophilum (strain DSM 2338 / JCM 9278 / NBRC 100436 / V24Sta) (Thermoproteus neutrophilus), this protein is Chorismate synthase.